A 485-amino-acid chain; its full sequence is MSAEDLEAQEDELLALASIYDADEFRKAESVQGGETRIYLDLPQNFKIFVSGNSNESLQNSGFEYTICFLPPLVLNFELPPDYPSSSPPSFTLSGKWLSPTQLSALCKHLDNLWEEHRGRVVLFAWMQFLKEETLTYLNIVSPFELKMGSQKKVQRRATAQASSSTELGVGGAAAADVDQEETVDERAVQDVESLSSLIQEILDFNQARQTKCFNSKLFLCSICFCEKLGSDCMYFLECKHVYCKACLKDYFEIQIKDGQVKCLNCPEPQCPSVATPGQVKELVEADLFARYDRLLLQSTLDLMADVVYCPRPCCQLPVMQEPGGTMAICSSCNFAFCTLCRLTYHGLSPCKVTAEKLIDLRNEYLQADEATKRFLEQRYGKRVIQKALEEMESKDWLEKNSKSCPCCGTPIQKLDGCNKMTCTGCMQYFCWICMGSLSRANPYRHFTDSESPCFNRLFHAVDINGDMWEDEIEEDDDDEDDDDD.

The 127-residue stretch at 11–137 (DELLALASIY…QFLKEETLTY (127 aa)) folds into the RWD domain. The short motif at 37–45 (RIYLDLPQN) is the D-box element. Positions 217–458 (KLFLCSICFC…DSESPCFNRL (242 aa)) are TRIAD supradomain. Zn(2+) contacts are provided by cysteine 221, cysteine 224, cysteine 239, histidine 241, cysteine 244, cysteine 247, cysteine 266, cysteine 271, cysteine 310, cysteine 315, cysteine 330, cysteine 333, cysteine 338, cysteine 341, and histidine 346. The segment at 221–271 (CSICFCEKLGSDCMYFLECKHVYCKACLKDYFEIQIKDGQVKCLNCPEPQC) adopts an RING-type 1 zinc-finger fold. An IBR-type zinc finger spans residues 290 to 351 (ARYDRLLLQS…RLTYHGLSPC (62 aa)). The residue at position 349 (serine 349) is a Phosphoserine. Cysteine 351, cysteine 405, and cysteine 408 together coordinate Zn(2+). The segment at 405–434 (CPCCGTPIQKLDGCNKMTCTGCMQYFCWIC) adopts an RING-type 2; atypical zinc-finger fold. Cysteine 418 is an active-site residue. Residues cysteine 423, cysteine 426, cysteine 431, cysteine 434, histidine 446, and cysteine 454 each contribute to the Zn(2+) site.

It belongs to the RBR family. RNF14 subfamily. In terms of assembly, interacts with GCN1; interaction takes place in response to ribosome collisions and is required for ubiquitination of EEF1A1/eEF1A. Interacts with the ubiquitin-conjugating enzymes UBE2E1 and UBE2E2. Interacts with AR/androgen receptor. Interacts with TCF7/TCF1, TCF7L1/TCF3 and TCF7L2/TCF4; promoting Wnt signaling. Post-translationally, RING-type zinc finger-dependent and UBE2E2-dependent autoubiquitination.

The protein resides in the cytoplasm. It localises to the nucleus. The enzyme catalyses [E2 ubiquitin-conjugating enzyme]-S-ubiquitinyl-L-cysteine + [acceptor protein]-L-lysine = [E2 ubiquitin-conjugating enzyme]-L-cysteine + [acceptor protein]-N(6)-ubiquitinyl-L-lysine.. Its pathway is protein modification; protein ubiquitination. E3 ubiquitin-protein ligase that plays a key role in the RNF14-RNF25 translation quality control pathway, a pathway that takes place when a ribosome has stalled during translation, and which promotes ubiquitination and degradation of translation factors on stalled ribosomes. Recruited to stalled ribosomes by the ribosome collision sensor GCN1 and mediates 'Lys-6'-linked ubiquitination of target proteins, leading to their degradation. Mediates ubiquitination of EEF1A1/eEF1A and ETF1/eRF1 translation factors on stalled ribosomes, leading to their degradation. Also catalyzes ubiquitination of ribosomal proteins RPL0, RPL1, RPL12, RPS13 and RPS17. Specifically required to resolve RNA-protein cross-links caused by reactive aldehydes, which trigger translation stress by stalling ribosomes: acts by catalying 'Lys-6'-linked ubiquitination of RNA-protein cross-links, leading to their removal by the ATP-dependent unfoldase VCP and subsequent degradation by the proteasome. Independently of its function in the response to stalled ribosomes, acts as a regulator of transcription in Wnt signaling via its interaction with TCF transcription factors (TCF7/TCF1, TCF7L1/TCF3 and TCF7L2/TCF4). May also play a role as a coactivator for androgen- and, to a lesser extent, progesterone-dependent transcription. In Mus musculus (Mouse), this protein is E3 ubiquitin-protein ligase RNF14.